The sequence spans 546 residues: Cysteine desulfurase SufS (546 aa).

Positions 1 to 22 (MLRGPRCLYIYLFFVFLPFSFC) are cleaved as a signal peptide. An N6-(pyridoxal phosphate)lysine modification is found at K291. The active-site Cysteine persulfide intermediate is C497.

The protein belongs to the class-V pyridoxal-phosphate-dependent aminotransferase family. Csd subfamily. Monomer. Interacts with SufE; interaction enhances cysteine desulfurase activity of SufS. Pyridoxal 5'-phosphate serves as cofactor. In terms of processing, proteolytically cleaved.

The protein resides in the plastid. Its subcellular location is the apicoplast. It catalyses the reaction (sulfur carrier)-H + L-cysteine = (sulfur carrier)-SH + L-alanine. Its pathway is cofactor biosynthesis; iron-sulfur cluster biosynthesis. Catalyzes sulfur activation and mobilization in sulfur mobilization (SUF) pathway for iron-sulfur (Fe-S) cluster biogenesis. Active when in complex with a partner protein SufE. Required for apicoplast maintenance. Plays a role in the development of sporozoites in oocysts in mosquitoes. May provide sulfur for MNMA-mediated tRNA modifications. The polypeptide is Cysteine desulfurase SufS (Plasmodium falciparum (isolate 3D7)).